A 211-amino-acid polypeptide reads, in one-letter code: ATP phosphoribosyltransferase (211 aa).

Belongs to the ATP phosphoribosyltransferase family. Short subfamily. As to quaternary structure, heteromultimer composed of HisG and HisZ subunits.

It is found in the cytoplasm. It carries out the reaction 1-(5-phospho-beta-D-ribosyl)-ATP + diphosphate = 5-phospho-alpha-D-ribose 1-diphosphate + ATP. Its pathway is amino-acid biosynthesis; L-histidine biosynthesis; L-histidine from 5-phospho-alpha-D-ribose 1-diphosphate: step 1/9. Functionally, catalyzes the condensation of ATP and 5-phosphoribose 1-diphosphate to form N'-(5'-phosphoribosyl)-ATP (PR-ATP). Has a crucial role in the pathway because the rate of histidine biosynthesis seems to be controlled primarily by regulation of HisG enzymatic activity. This chain is ATP phosphoribosyltransferase, found in Bacillus thuringiensis subsp. konkukian (strain 97-27).